We begin with the raw amino-acid sequence, 189 residues long: MRKMNLIVAMDAEGGIGKNGVLPWRIKKDMQYFASVTKNVSDQSKRNAVLMGRKCWESIPVTRRPLAGRLNIVLSRQLPAQKSDDYIVVNSLEAAMKLLSEPPFVDSIETIWNIGGAEIYDLALRENLVDEIHLTRIFKNFEADVHLKSLDFSKMEKVQNAEVSSENSEIFEENGLKFEFCKWKVVENH.

The region spanning 3–185 (KMNLIVAMDA…LKFEFCKWKV (183 aa)) is the DHFR domain. Residues A9 and 15–21 (GIGKNGV) contribute to the NADP(+) site. 29 to 34 (DMQYFA) is a substrate binding site. 53-55 (RKC) lines the NADP(+) pocket. Residue R69 coordinates substrate. NADP(+) is bound by residues 75–77 (SRQ) and 115–122 (GGAEIYDL).

Belongs to the dihydrofolate reductase family.

It carries out the reaction (6S)-5,6,7,8-tetrahydrofolate + NADP(+) = 7,8-dihydrofolate + NADPH + H(+). The protein operates within cofactor biosynthesis; tetrahydrofolate biosynthesis; 5,6,7,8-tetrahydrofolate from 7,8-dihydrofolate: step 1/1. Key enzyme in folate metabolism. Catalyzes an essential reaction for de novo glycine and purine synthesis, and for DNA precursor synthesis. The sequence is that of Putative dihydrofolate reductase (dhfr-1) from Caenorhabditis elegans.